Reading from the N-terminus, the 260-residue chain is Thrombin-like enzyme flavoxobin (260 aa).

Positions 1–18 are cleaved as a signal peptide; sequence MVLIRVLANLLILQLSYA. The propeptide occupies 19–24; it reads QKSSEL. Residues 25 to 251 form the Peptidase S1 domain; sequence VIGGDECNIN…YNAWIQSIIA (227 aa). 6 disulfide bridges follow: Cys-31–Cys-165, Cys-52–Cys-68, Cys-100–Cys-258, Cys-144–Cys-212, Cys-176–Cys-191, and Cys-202–Cys-227. Active-site charge relay system residues include His-67 and Asp-112. Ser-206 serves as the catalytic Charge relay system.

It belongs to the peptidase S1 family. Snake venom subfamily. In terms of assembly, monomer. As to expression, expressed by the venom gland.

It localises to the secreted. The catalysed reaction is Selective cleavage of Arg-|-Xaa bond in fibrinogen, to form fibrin, and release fibrinopeptide A. The specificity of further degradation of fibrinogen varies with species origin of the enzyme.. Inhibited by alpha(2)-macroglobulin, diisopropylfluorophosphate (DFP) and PMSF. Low inhibition by tosyl-L-lysine chloromethyl ketone. Thrombin-like snake venom serine protease that clots fibrinogen (FGA) by releasing fibrinopeptide A. According to PubMed:8585090, only cleaves rabbit fibrinogen, whereas no specificity is described in PubMed:3910643 (tests done on bovine fibrinogen). Also acts as a C3 convertase that independently cleaves human C3 and kick-starts the complement cascade. Also increases urokinase-type plasminogen activator (PLAU) and plasminogen activator inhibitor (SERPINE1) in cultured bovine pulmonary artery endothelial cells. Dose-dependently inhibits collagen-induced platelet aggregation. In Protobothrops flavoviridis (Habu), this protein is Thrombin-like enzyme flavoxobin (TLF1).